Reading from the N-terminus, the 135-residue chain is ATP synthase epsilon chain (135 aa).

This sequence belongs to the ATPase epsilon chain family. In terms of assembly, F-type ATPases have 2 components, CF(1) - the catalytic core - and CF(0) - the membrane proton channel. CF(1) has five subunits: alpha(3), beta(3), gamma(1), delta(1), epsilon(1). CF(0) has three main subunits: a, b and c.

The protein localises to the cell inner membrane. Its function is as follows. Produces ATP from ADP in the presence of a proton gradient across the membrane. The polypeptide is ATP synthase epsilon chain (Rhizobium etli (strain CIAT 652)).